The primary structure comprises 212 residues: Peptide methionine sulfoxide reductase MsrA (212 aa).

Residue C52 is part of the active site.

Belongs to the MsrA Met sulfoxide reductase family.

It carries out the reaction L-methionyl-[protein] + [thioredoxin]-disulfide + H2O = L-methionyl-(S)-S-oxide-[protein] + [thioredoxin]-dithiol. The enzyme catalyses [thioredoxin]-disulfide + L-methionine + H2O = L-methionine (S)-S-oxide + [thioredoxin]-dithiol. In terms of biological role, has an important function as a repair enzyme for proteins that have been inactivated by oxidation. Catalyzes the reversible oxidation-reduction of methionine sulfoxide in proteins to methionine. In Escherichia coli O17:K52:H18 (strain UMN026 / ExPEC), this protein is Peptide methionine sulfoxide reductase MsrA.